Consider the following 259-residue polypeptide: Ribosomal RNA small subunit methyltransferase A (259 aa).

Residues N13, L15, G40, E61, D85, and N103 each contribute to the S-adenosyl-L-methionine site.

It belongs to the class I-like SAM-binding methyltransferase superfamily. rRNA adenine N(6)-methyltransferase family. RsmA subfamily.

The protein resides in the cytoplasm. It carries out the reaction adenosine(1518)/adenosine(1519) in 16S rRNA + 4 S-adenosyl-L-methionine = N(6)-dimethyladenosine(1518)/N(6)-dimethyladenosine(1519) in 16S rRNA + 4 S-adenosyl-L-homocysteine + 4 H(+). Functionally, specifically dimethylates two adjacent adenosines (A1518 and A1519) in the loop of a conserved hairpin near the 3'-end of 16S rRNA in the 30S particle. May play a critical role in biogenesis of 30S subunits. This chain is Ribosomal RNA small subunit methyltransferase A, found in Neisseria meningitidis serogroup B (strain ATCC BAA-335 / MC58).